The following is a 190-amino-acid chain: MSEGKLFYVIGPSGSGKDSLMRYGRERLAGDPGVVFAHRYITRPVELHGENHVALTEDEFDARLATGLFALHWDSHGLRYGIGREINLWLAKGCNVVLNGSREYLPEARRRYPGLTAILVNVSPEVLAERLRARGRETEDQISRRVARAKQFMHPEGRLEVIANDAELHVAGERLVQLLSDADASKRAFA.

G11–D18 is a binding site for ATP.

This sequence belongs to the ribose 1,5-bisphosphokinase family.

The enzyme catalyses alpha-D-ribose 1,5-bisphosphate + ATP = 5-phospho-alpha-D-ribose 1-diphosphate + ADP. It participates in metabolic intermediate biosynthesis; 5-phospho-alpha-D-ribose 1-diphosphate biosynthesis; 5-phospho-alpha-D-ribose 1-diphosphate from D-ribose 5-phosphate (route II): step 3/3. In terms of biological role, catalyzes the phosphorylation of ribose 1,5-bisphosphate to 5-phospho-D-ribosyl alpha-1-diphosphate (PRPP). This chain is Ribose 1,5-bisphosphate phosphokinase PhnN, found in Thiobacillus denitrificans (strain ATCC 25259 / T1).